We begin with the raw amino-acid sequence, 171 residues long: uncharacterized protein (171 aa).

The tract at residues 139-171 (ARKPTKSDDEEEEVGKMGGISSSINSWVQRQKL) is disordered. The segment covering 158–171 (ISSSINSWVQRQKL) has biased composition (polar residues).

This is an uncharacterized protein from Caenorhabditis elegans.